A 241-amino-acid chain; its full sequence is Uridylate kinase (241 aa).

15–18 provides a ligand contact to ATP; that stretch reads KLSG. The tract at residues 23 to 28 is involved in allosteric activation by GTP; that stretch reads GSEGFG. Gly-57 contacts UMP. The ATP site is built by Gly-58 and Arg-62. UMP contacts are provided by residues Asp-77 and 138-145; that span reads TGNPFCTT. Residues Thr-165, Tyr-171, and Asp-174 each coordinate ATP.

Belongs to the UMP kinase family. In terms of assembly, homohexamer.

The protein resides in the cytoplasm. It catalyses the reaction UMP + ATP = UDP + ADP. Its pathway is pyrimidine metabolism; CTP biosynthesis via de novo pathway; UDP from UMP (UMPK route): step 1/1. Its activity is regulated as follows. Allosterically activated by GTP. Inhibited by UTP. Functionally, catalyzes the reversible phosphorylation of UMP to UDP. The chain is Uridylate kinase from Shewanella amazonensis (strain ATCC BAA-1098 / SB2B).